Here is a 323-residue protein sequence, read N- to C-terminus: Protein translocase subunit SecF (323 aa).

Over 1 to 22 (MAQEYTVEQLNHGRKVYDFMRW) the chain is Cytoplasmic. Residues 23-43 (DYWAFGISGLLLIAAIVIMGV) form a helical membrane-spanning segment. The Periplasmic segment spans residues 44 to 142 (RGFNWGLDFT…FVGPSVGADL (99 aa)). Residues 143–163 (AQTGAMALMAALLSILVYVGF) traverse the membrane as a helical segment. The Cytoplasmic portion of the chain corresponds to 164–170 (RFEWRLA). Residues 171–191 (AGVVIALAHDVIITLGILSLF) form a helical membrane-spanning segment. Topologically, residues 192–196 (HIEID) are periplasmic. Residues 197–217 (LTIVASLMSVIGYSLNDSIVV) traverse the membrane as a helical segment. Residues 218 to 247 (SDRIRENFRKIRRGTPYEIFNVSLTQTLHR) lie on the Cytoplasmic side of the membrane. Residues 248 to 270 (TLITSGTTLMVILMLYLFGGPVL) form a helical membrane-spanning segment. Residues 271–280 (EGFSLTMLIG) lie on the Periplasmic side of the membrane. The chain crosses the membrane as a helical span at residues 281–301 (VSIGTASSIYVASALALKLGM). Over 302 to 323 (KREHMLQQKVEKEGADQPSILP) the chain is Cytoplasmic.

Belongs to the SecD/SecF family. SecF subfamily. In terms of assembly, forms a complex with SecD. Part of the essential Sec protein translocation apparatus which comprises SecA, SecYEG and auxiliary proteins SecDF-YajC and YidC.

The protein resides in the cell inner membrane. Functionally, part of the Sec protein translocase complex. Interacts with the SecYEG preprotein conducting channel. SecDF uses the proton motive force (PMF) to complete protein translocation after the ATP-dependent function of SecA. This Escherichia coli O157:H7 protein is Protein translocase subunit SecF.